The sequence spans 105 residues: Thioredoxin (105 aa).

The 104-residue stretch at 2 to 105 folds into the Thioredoxin domain; that stretch reads VKQIESKSAF…KLEATINELL (104 aa). N6-acetyllysine is present on lysine 3. Lysine 8 is modified (N6-succinyllysine). Residues cysteine 32 and cysteine 35 each act as nucleophile in the active site. Cysteine 32 and cysteine 35 form a disulfide bridge. At lysine 39 the chain carries N6-acetyllysine. S-nitrosocysteine is present on residues cysteine 62 and cysteine 69. An S-nitrosocysteine; alternate modification is found at cysteine 73. An N6-acetyllysine; alternate modification is found at lysine 94. An N6-succinyllysine; alternate modification is found at lysine 94.

Belongs to the thioredoxin family. As to quaternary structure, homodimer; disulfide-linked. Interacts with TXNIP through the redox-active site. Interacts with MAP3K5 and CASP3. Interacts with APEX1; the interaction stimulates the FOS/JUN AP-1 DNA-binding activity in a redox-dependent manner. In the fully reduced protein, both Cys-69 and Cys-73 are nitrosylated in response to nitric oxide (NO). When two disulfide bonds are present in the protein, only Cys-73 is nitrosylated. Cys-73 can serve as donor for nitrosylation of target proteins.

It localises to the nucleus. Its subcellular location is the cytoplasm. It is found in the secreted. Functionally, participates in various redox reactions through the reversible oxidation of its active center dithiol to a disulfide and catalyzes dithiol-disulfide exchange reactions. Plays a role in the reversible S-nitrosylation of cysteine residues in target proteins, and thereby contributes to the response to intracellular nitric oxide. Nitrosylates the active site Cys of CASP3 in response to nitric oxide (NO), and thereby inhibits caspase-3 activity. Induces the FOS/JUN AP-1 DNA binding activity in ionizing radiation (IR) cells through its oxidation/reduction status and stimulates AP-1 transcriptional activity. This is Thioredoxin (TXN) from Oryctolagus cuniculus (Rabbit).